The chain runs to 567 residues: Lipase maturation factor 1 (567 aa).

Residues 1 to 39 (MRPDSPTMAAPAESLRRRKTGYSDPEPESPPAPGRGPAG) form a disordered region. The Cytoplasmic segment spans residues 1 to 49 (MRPDSPTMAAPAESLRRRKTGYSDPEPESPPAPGRGPAGSPAHLHTGTF). A helical transmembrane segment spans residues 50–72 (WLTRIVLLKALAFVYFVAFLVAF). Residues 73-127 (HQNKQLIGDRGLLPCRVFLKNFQQYFQDRTSWEVFSYMPTILWLMDWSDMNSNLD) lie on the Lumenal side of the membrane. Residues 128–151 (LLALLGLGISSFVLITGCANMLLM) traverse the membrane as a helical segment. Over 152–207 (AALWGLYMSLVNVGHVWYSFGWESQLLETGFLGIFLCPLWTLSRLPQHTPTSRIVL) the chain is Cytoplasmic. Residues 208–221 (WGFRWLIFRIMLGA) form a helical membrane-spanning segment. At 222–292 (GLIKIRGDRC…LGRRACIIHG (71 aa)) the chain is on the lumenal side. Residues 293–321 (VLQILFQAVLIVSGNLSFLNWLTMVPSLA) traverse the membrane as a helical segment. The Cytoplasmic portion of the chain corresponds to 322 to 367 (CFDDATLGFLFPSGPGSLKDRVLQMQRDIRGARPEPRFGSVVRRAA). Residues 368–388 (NVSLGVLLAWLSVPVVLNLLS) form a helical membrane-spanning segment. Residues 389-567 (SRQVMNTHFN…DRGWPLPGPL (179 aa)) are Lumenal-facing.

Belongs to the lipase maturation factor family. In terms of assembly, interacts with LPL and SEL1L.

Its subcellular location is the endoplasmic reticulum membrane. Involved in the maturation of specific proteins in the endoplasmic reticulum. Required for maturation and transport of active lipoprotein lipase (LPL) through the secretory pathway. Each LMF1 molecule chaperones 50 or more molecules of LPL. This is Lipase maturation factor 1 (LMF1) from Homo sapiens (Human).